A 114-amino-acid polypeptide reads, in one-letter code: T cell receptor beta variable 6-4 (114 aa).

A signal peptide spans 1–21 (MSIRLLCCVAFSLLWAGPVTA). The Ig-like domain maps to 22 to 114 (GITQAPTSQI…TSVYFCASSD (93 aa)). Cysteine 42 and cysteine 110 form a disulfide bridge.

In terms of assembly, alpha-beta TR is a heterodimer composed of an alpha and beta chain; disulfide-linked. The alpha-beta TR is associated with the transmembrane signaling CD3 coreceptor proteins to form the TR-CD3 (TcR or TCR). The assembly of alpha-beta TR heterodimers with CD3 occurs in the endoplasmic reticulum where a single alpha-beta TR heterodimer associates with one CD3D-CD3E heterodimer, one CD3G-CD3E heterodimer and one CD247 homodimer forming a stable octameric structure. CD3D-CD3E and CD3G-CD3E heterodimers preferentially associate with TR alpha and TR beta chains, respectively. The association of the CD247 homodimer is the last step of TcR assembly in the endoplasmic reticulum and is required for transport to the cell surface.

The protein resides in the cell membrane. V region of the variable domain of T cell receptor (TR) beta chain that participates in the antigen recognition. Alpha-beta T cell receptors are antigen specific receptors which are essential to the immune response and are present on the cell surface of T lymphocytes. Recognize peptide-major histocompatibility (MH) (pMH) complexes that are displayed by antigen presenting cells (APC), a prerequisite for efficient T cell adaptive immunity against pathogens. Binding of alpha-beta TR to pMH complex initiates TR-CD3 clustering on the cell surface and intracellular activation of LCK that phosphorylates the ITAM motifs of CD3G, CD3D, CD3E and CD247 enabling the recruitment of ZAP70. In turn ZAP70 phosphorylates LAT, which recruits numerous signaling molecules to form the LAT signalosome. The LAT signalosome propagates signal branching to three major signaling pathways, the calcium, the mitogen-activated protein kinase (MAPK) kinase and the nuclear factor NF-kappa-B (NF-kB) pathways, leading to the mobilization of transcription factors that are critical for gene expression and essential for T cell growth and differentiation. The T cell repertoire is generated in the thymus, by V-(D)-J rearrangement. This repertoire is then shaped by intrathymic selection events to generate a peripheral T cell pool of self-MH restricted, non-autoaggressive T cells. Post-thymic interaction of alpha-beta TR with the pMH complexes shapes TR structural and functional avidity. In Homo sapiens (Human), this protein is T cell receptor beta variable 6-4.